The chain runs to 241 residues: Small ribosomal subunit protein bS6 (241 aa).

Residues 97 to 108 (KPKIRERNRKYT) show a composition bias toward basic residues. Disordered stretches follow at residues 97–187 (KPKI…HREN) and 199–241 (NKNH…QSSN). Residues 109–118 (PRRDRFDKPN) show a composition bias toward basic and acidic residues. 3 stretches are compositionally biased toward low complexity: residues 130–151 (QDQQATKNQQNFQQNQQNQTSQ), 161–180 (DDFQQVSSNQQNFRQNQQNQ), and 199–210 (NKNHQNQTSQTQ).

This sequence belongs to the bacterial ribosomal protein bS6 family.

Its function is as follows. Binds together with bS18 to 16S ribosomal RNA. In Mesomycoplasma hyopneumoniae (strain 7448) (Mycoplasma hyopneumoniae), this protein is Small ribosomal subunit protein bS6.